Here is a 247-residue protein sequence, read N- to C-terminus: Zinc finger protein YPR015C (247 aa).

C2H2-type zinc fingers lie at residues 185-207 and 213-237; these read KQCP…YLIH and FKCT…LRTH.

This Saccharomyces cerevisiae (strain ATCC 204508 / S288c) (Baker's yeast) protein is Zinc finger protein YPR015C.